Consider the following 710-residue polypeptide: Gastrulation-defective protein 3 (710 aa).

Residues 597–615 (AYYVFTVLALIISNFPTIV) form a helical membrane-spanning segment.

The protein localises to the membrane. The protein is Gastrulation-defective protein 3 (gadr-3) of Caenorhabditis elegans.